We begin with the raw amino-acid sequence, 227 residues long: MAYPFQLGLQDATSPIMEELMNFHDHTLMIVFLISSLVLYIISLMLTTKLTHTSTMDAQEVETIWTILPAVILILIALPSLRILYMMDEINNPVLTVKTMGHQWYWSYEYTDYEDLCFDSYMIPTNDLKPGELRLLEVDNRVVLPMELPIRMLISSEDVLHSWAVPSLGLKTDAIPGRLNQATVTSNRPGLYYGQCSEICGSNHSFMPIVLEMVPLKNFENWSASMI.

Residues 1–14 (MAYPFQLGLQDATS) are Mitochondrial intermembrane-facing. The helical transmembrane segment at 15–45 (PIMEELMNFHDHTLMIVFLISSLVLYIISLM) threads the bilayer. The Mitochondrial matrix portion of the chain corresponds to 46–59 (LTTKLTHTSTMDAQ). Residues 60–87 (EVETIWTILPAVILILIALPSLRILYMM) form a helical membrane-spanning segment. Over 88–227 (DEINNPVLTV…NFENWSASMI (140 aa)) the chain is Mitochondrial intermembrane. The Cu cation site is built by His161, Cys196, Glu198, Cys200, His204, and Met207. Glu198 is a Mg(2+) binding site.

Belongs to the cytochrome c oxidase subunit 2 family. Component of the cytochrome c oxidase (complex IV, CIV), a multisubunit enzyme composed of 14 subunits. The complex is composed of a catalytic core of 3 subunits MT-CO1, MT-CO2 and MT-CO3, encoded in the mitochondrial DNA, and 11 supernumerary subunits COX4I, COX5A, COX5B, COX6A, COX6B, COX6C, COX7A, COX7B, COX7C, COX8 and NDUFA4, which are encoded in the nuclear genome. The complex exists as a monomer or a dimer and forms supercomplexes (SCs) in the inner mitochondrial membrane with NADH-ubiquinone oxidoreductase (complex I, CI) and ubiquinol-cytochrome c oxidoreductase (cytochrome b-c1 complex, complex III, CIII), resulting in different assemblies (supercomplex SCI(1)III(2)IV(1) and megacomplex MCI(2)III(2)IV(2)). Found in a complex with TMEM177, COA6, COX18, COX20, SCO1 and SCO2. Interacts with TMEM177 in a COX20-dependent manner. Interacts with COX20. Interacts with COX16. Requires Cu cation as cofactor.

It localises to the mitochondrion inner membrane. It catalyses the reaction 4 Fe(II)-[cytochrome c] + O2 + 8 H(+)(in) = 4 Fe(III)-[cytochrome c] + 2 H2O + 4 H(+)(out). Functionally, component of the cytochrome c oxidase, the last enzyme in the mitochondrial electron transport chain which drives oxidative phosphorylation. The respiratory chain contains 3 multisubunit complexes succinate dehydrogenase (complex II, CII), ubiquinol-cytochrome c oxidoreductase (cytochrome b-c1 complex, complex III, CIII) and cytochrome c oxidase (complex IV, CIV), that cooperate to transfer electrons derived from NADH and succinate to molecular oxygen, creating an electrochemical gradient over the inner membrane that drives transmembrane transport and the ATP synthase. Cytochrome c oxidase is the component of the respiratory chain that catalyzes the reduction of oxygen to water. Electrons originating from reduced cytochrome c in the intermembrane space (IMS) are transferred via the dinuclear copper A center (CU(A)) of subunit 2 and heme A of subunit 1 to the active site in subunit 1, a binuclear center (BNC) formed by heme A3 and copper B (CU(B)). The BNC reduces molecular oxygen to 2 water molecules using 4 electrons from cytochrome c in the IMS and 4 protons from the mitochondrial matrix. The sequence is that of Cytochrome c oxidase subunit 2 (MT-CO2) from Maxomys bartelsii (Bartels's Javan maxomys).